The chain runs to 252 residues: 2-succinyl-6-hydroxy-2,4-cyclohexadiene-1-carboxylate synthase (252 aa).

This sequence belongs to the AB hydrolase superfamily. MenH family. Monomer.

The enzyme catalyses 5-enolpyruvoyl-6-hydroxy-2-succinyl-cyclohex-3-ene-1-carboxylate = (1R,6R)-6-hydroxy-2-succinyl-cyclohexa-2,4-diene-1-carboxylate + pyruvate. It functions in the pathway quinol/quinone metabolism; 1,4-dihydroxy-2-naphthoate biosynthesis; 1,4-dihydroxy-2-naphthoate from chorismate: step 3/7. It participates in quinol/quinone metabolism; menaquinone biosynthesis. Its function is as follows. Catalyzes a proton abstraction reaction that results in 2,5-elimination of pyruvate from 2-succinyl-5-enolpyruvyl-6-hydroxy-3-cyclohexene-1-carboxylate (SEPHCHC) and the formation of 2-succinyl-6-hydroxy-2,4-cyclohexadiene-1-carboxylate (SHCHC). The chain is 2-succinyl-6-hydroxy-2,4-cyclohexadiene-1-carboxylate synthase from Salmonella newport (strain SL254).